A 149-amino-acid polypeptide reads, in one-letter code: Large ribosomal subunit protein uL15 (149 aa).

Residues methionine 1–leucine 57 form a disordered region. Residues isoleucine 23–methionine 35 show a composition bias toward gly residues.

It belongs to the universal ribosomal protein uL15 family. Part of the 50S ribosomal subunit.

Its function is as follows. Binds to the 23S rRNA. The protein is Large ribosomal subunit protein uL15 of Acaryochloris marina (strain MBIC 11017).